The primary structure comprises 315 residues: Protein sprouty homolog 2 (315 aa).

Positions M1–L14 are enriched in polar residues. 2 disordered regions span residues M1 to V38 and N51 to F140. Over residues D20–D32 the composition is skewed to basic and acidic residues. Residues P88–H100 show a composition bias toward pro residues. The segment covering R109–F140 has biased composition (low complexity). The segment at S118 to T315 is required for interaction with CAV1. An SPR domain is found at K177–C291. A required for interaction with TESK1 region spans residues C178 to T315.

This sequence belongs to the sprouty family. As to quaternary structure, forms heterodimers with SPRY1. Forms a tripartite complex containing GAB1, METTL13 and SPRY2. Within the complex interacts with METTL13. Interacts with RAF1. Interacts (via C-terminus) with TESK1 (via C-terminus); the interaction disrupts SPRY2 interaction with GRB2, potentially via disruption of SPRY2 serine dephosphorylation. Interacts with PPP2R1A/PP2A-A and PPP2CA/PP2A-C; the interaction with PPP2CA/PP2A-C is inhibited by interaction with TESK1, possibly by vesicular sequestration of SPRY2. Inhibition of the interaction with the serine/threonine-protein phosphatase 2A (PP2A) holoenzyme results in loss of PP2A-mediated dephosphorylation, resulting in the loss of SPRY2 interaction with GRB2. Interacts with GRB2. Interacts with CBL/C-CBL; the interaction inhibits CBL-mediated ubiquitination of EGFR. Interacts (via C-terminus) with CAV1 (via C-terminus). Cleaved at Pro-144 by the prolyl endopeptidase FAP (seprase) activity (in vitro).

It localises to the cytoplasm. It is found in the cytoskeleton. The protein resides in the cell projection. Its subcellular location is the ruffle membrane. Functionally, antagonist of fibroblast growth factor (FGF) pathways via inhibition of FGF-mediated phosphorylation of ERK1/2. Thereby acts as an antagonist of FGF-induced retinal lens fiber differentiation, may inhibit limb bud outgrowth and may negatively modulate respiratory organogenesis. Inhibits TGFB-induced epithelial-to-mesenchymal transition in retinal lens epithelial cells. Inhibits CBL/C-CBL-mediated EGFR ubiquitination. This is Protein sprouty homolog 2 (SPRY2) from Bos taurus (Bovine).